A 303-amino-acid chain; its full sequence is MYYGFDMGGTKIELGVFDANLQRIWHKRVPTPREDYSLLLQTLHDLTREADEFCGSKGSVGIGIPGLPNADDGTVFTANVPAAMGQSLQGDLSGLIGREVRIDNDANCFALSEAWDPEFRRYPTVLGLILGTGVGGGLIVNGNIVSGRNHITGEFGHFRLPVDALDILGADIPRVSCGCGHNGCIENYISGRGFEWMYKHFNQQSLPATEIIANYNLGESKAVAHVERFMDVLAVCLGNLLTMLDPHLVVIGGGLSNFEHIYQELPKRLPQHLLRVARLPRIEKARYGDAGGVRGAAFLHLSK.

Residues 4-11 (GFDMGGTK) and 133-140 (GVGGGLIV) contribute to the ATP site. Positions 157, 177, 179, and 184 each coordinate Zn(2+).

Belongs to the ROK (NagC/XylR) family. NagK subfamily.

It catalyses the reaction N-acetyl-D-glucosamine + ATP = N-acetyl-D-glucosamine 6-phosphate + ADP + H(+). It functions in the pathway cell wall biogenesis; peptidoglycan recycling. Its function is as follows. Catalyzes the phosphorylation of N-acetyl-D-glucosamine (GlcNAc) derived from cell-wall degradation, yielding GlcNAc-6-P. This is N-acetyl-D-glucosamine kinase from Yersinia enterocolitica serotype O:8 / biotype 1B (strain NCTC 13174 / 8081).